A 326-amino-acid chain; its full sequence is Macrosialin (326 aa).

The N-terminal stretch at 1 to 20 (MRLPVCLILLGPLIAQGTEE) is a signal peptide. The segment at 21-109 (DCPHKKAVTL…ATSPRSSTVG (89 aa)) is mucin-like. The Extracellular segment spans residues 21–291 (DCPHKKAVTL…PCFSCNRDQS (271 aa)). Low complexity predominate over residues 38–58 (PTATESTASPTTSHRPTTTSH). The disordered stretch occupies residues 38-129 (PTATESTASP…SPRSKGALGN (92 aa)). 4 repeat units span residues 44-49 (TASPTT), 50-64 (SHRPTTTSHGNVTVH), 65-72 (TSSGPTTV), and 73-88 (THNPATTTSHGNATIS). The span at 59 to 69 (GNVTVHTSSGP) shows a compositional bias: polar residues. Asparagine 60 carries N-linked (GlcNAc...) asparagine glycosylation. The segment covering 70–80 (TTVTHNPATTT) has biased composition (low complexity). Positions 81–108 (SHGNATISHATVSPTTNGTATSPRSSTV) are enriched in polar residues. Asparagine 84 and asparagine 97 each carry an N-linked (GlcNAc...) asparagine glycan. Pro residues predominate over residues 111 to 120 (HPGPPPPSPS). 6 N-linked (GlcNAc...) asparagine glycosylation sites follow: asparagine 129, asparagine 134, asparagine 169, asparagine 218, asparagine 233, and asparagine 251. Cysteine 139 and cysteine 177 are joined by a disulfide. A disulfide bond links cysteine 249 and cysteine 286. A helical membrane pass occupies residues 292-316 (LLLPLIIGLVLLGLLTLVLIAFCIT). Over 317–326 (RRRQSTYQPL) the chain is Cytoplasmic.

Belongs to the LAMP family. N- and O-glycosylated. In terms of tissue distribution, expressed in tissue macrophages and to a lesser extent in dendritic cells.

It localises to the endosome membrane. The protein resides in the lysosome membrane. Its subcellular location is the cell membrane. Could play a role in phagocytic activities of tissue macrophages, both in intracellular lysosomal metabolism and extracellular cell-cell and cell-pathogen interactions. Binds to tissue- and organ-specific lectins or selectins, allowing homing of macrophage subsets to particular sites. Rapid recirculation of CD68 from endosomes and lysosomes to the plasma membrane may allow macrophages to crawl over selectin-bearing substrates or other cells. The protein is Macrosialin (Cd68) of Mus musculus (Mouse).